A 487-amino-acid polypeptide reads, in one-letter code: UDP-glycosyltransferase 85A7 (487 aa).

UDP-alpha-D-glucose is bound by residues 364 to 366 (CPQ), 381 to 389 (HCGWNSTLE), and 403 to 406 (FSEQ).

The protein belongs to the UDP-glycosyltransferase family. Expressed in roots, shoots, leaves and flowers.

This chain is UDP-glycosyltransferase 85A7 (UGT85A7), found in Arabidopsis thaliana (Mouse-ear cress).